We begin with the raw amino-acid sequence, 86 residues long: Small ribosomal subunit protein uS17 (86 aa).

Belongs to the universal ribosomal protein uS17 family. Part of the 30S ribosomal subunit.

Functionally, one of the primary rRNA binding proteins, it binds specifically to the 5'-end of 16S ribosomal RNA. The polypeptide is Small ribosomal subunit protein uS17 (Desulfotalea psychrophila (strain LSv54 / DSM 12343)).